A 228-amino-acid polypeptide reads, in one-letter code: Octanoyltransferase (228 aa).

The BPL/LPL catalytic domain maps to 31 to 212; the sequence is GETDGILILL…KFSEVFGIHF (182 aa). Residues 76–83, 143–145, and 156–158 contribute to the substrate site; these read RGGKITFH, AIG, and GIA. The active-site Acyl-thioester intermediate is the Cys174.

It belongs to the LipB family.

It localises to the cytoplasm. It carries out the reaction octanoyl-[ACP] + L-lysyl-[protein] = N(6)-octanoyl-L-lysyl-[protein] + holo-[ACP] + H(+). The protein operates within protein modification; protein lipoylation via endogenous pathway; protein N(6)-(lipoyl)lysine from octanoyl-[acyl-carrier-protein]: step 1/2. Functionally, catalyzes the transfer of endogenously produced octanoic acid from octanoyl-acyl-carrier-protein onto the lipoyl domains of lipoate-dependent enzymes. Lipoyl-ACP can also act as a substrate although octanoyl-ACP is likely to be the physiological substrate. The chain is Octanoyltransferase from Thermoanaerobacter pseudethanolicus (strain ATCC 33223 / 39E) (Clostridium thermohydrosulfuricum).